The following is a 272-amino-acid chain: NAD kinase (272 aa).

Residue D50 is the Proton acceptor of the active site. Residues 50–51 (DG), 126–127 (NE), R152, D154, 165–170 (TAYNKS), and A189 each bind NAD(+).

The protein belongs to the NAD kinase family. A divalent metal cation serves as cofactor.

It is found in the cytoplasm. The enzyme catalyses NAD(+) + ATP = ADP + NADP(+) + H(+). Its function is as follows. Involved in the regulation of the intracellular balance of NAD and NADP, and is a key enzyme in the biosynthesis of NADP. Catalyzes specifically the phosphorylation on 2'-hydroxyl of the adenosine moiety of NAD to yield NADP. This is NAD kinase from Streptococcus pneumoniae (strain Hungary19A-6).